A 365-amino-acid chain; its full sequence is MSKIKVLIVDDSAFMRKVLEDILKSDDEIEVVATAKDGKEAFELVKKLEPNVITMDVEMPIMNGIDATKQIMAYKPTPILMLSAVTKQGSEATLKALDNGAVDFIEKPSGSVSLDIRKIGEKIIKQVKDASKSKVRIKSSRILENIKKEKQDESSTPKPQVEKTSGLSPEKLNDTAILIGSSTGGPPVVSSIISNIPKNTPPIFIVQHMPKGFTRVFAERMNNNSAITVKEAEHGEIVKPDHAYVAPGDSQMVLQKRGGNVYIIIDENMPKIHGTKPTVDVTAEYVTKYYGKNTIGVLLTGIGRDGANGLKMVKNKGGYTIAQNQDTCVIYGMPKTAIEMNVVDKVMDPIDIPLEIIKFAKKIGG.

A Response regulatory domain is found at 5–122; that stretch reads KVLIVDDSAF…SLDIRKIGEK (118 aa). 4-aspartylphosphate is present on Asp-56. A compositionally biased stretch (basic and acidic residues) spans 146–155; sequence IKKEKQDESS. Residues 146 to 167 are disordered; the sequence is IKKEKQDESSTPKPQVEKTSGL. Residues 156–167 show a composition bias toward polar residues; the sequence is TPKPQVEKTSGL. A CheB-type methylesterase domain is found at 177–363; that stretch reads ILIGSSTGGP…LEIIKFAKKI (187 aa). Residues Ser-182, His-208, and Asp-305 contribute to the active site.

It belongs to the CheB family. Phosphorylated by CheA. Phosphorylation of the N-terminal regulatory domain activates the methylesterase activity.

It localises to the cytoplasm. It carries out the reaction [protein]-L-glutamate 5-O-methyl ester + H2O = L-glutamyl-[protein] + methanol + H(+). The catalysed reaction is L-glutaminyl-[protein] + H2O = L-glutamyl-[protein] + NH4(+). In terms of biological role, involved in chemotaxis. Part of a chemotaxis signal transduction system that modulates chemotaxis in response to various stimuli. Catalyzes the demethylation of specific methylglutamate residues introduced into the chemoreceptors (methyl-accepting chemotaxis proteins or MCP) by CheR. Also mediates the irreversible deamidation of specific glutamine residues to glutamic acid. This is Protein-glutamate methylesterase/protein-glutamine glutaminase from Methanococcus maripaludis (strain DSM 14266 / JCM 13030 / NBRC 101832 / S2 / LL).